We begin with the raw amino-acid sequence, 725 residues long: Phosphoribosylformylglycinamidine synthase subunit PurL (725 aa).

His34 is a catalytic residue. Tyr37 provides a ligand contact to ATP. Residue Glu93 participates in Mg(2+) binding. Substrate contacts are provided by residues 94–97 (SHNH) and Arg116. The active-site Proton acceptor is the His95. Asp117 contributes to the Mg(2+) binding site. Positions 220–241 (GASFASEDLSEDAETEDRPAVQ) are disordered. Gln241 lines the substrate pocket. Asp269 is a Mg(2+) binding site. 313-315 (ESQ) lines the substrate pocket. ATP is bound by residues Asp489 and Gly526. A Mg(2+)-binding site is contributed by Asn527. Residue Ser529 coordinates substrate.

Belongs to the FGAMS family. As to quaternary structure, monomer. Part of the FGAM synthase complex composed of 1 PurL, 1 PurQ and 2 PurS subunits.

It is found in the cytoplasm. The enzyme catalyses N(2)-formyl-N(1)-(5-phospho-beta-D-ribosyl)glycinamide + L-glutamine + ATP + H2O = 2-formamido-N(1)-(5-O-phospho-beta-D-ribosyl)acetamidine + L-glutamate + ADP + phosphate + H(+). It participates in purine metabolism; IMP biosynthesis via de novo pathway; 5-amino-1-(5-phospho-D-ribosyl)imidazole from N(2)-formyl-N(1)-(5-phospho-D-ribosyl)glycinamide: step 1/2. In terms of biological role, part of the phosphoribosylformylglycinamidine synthase complex involved in the purines biosynthetic pathway. Catalyzes the ATP-dependent conversion of formylglycinamide ribonucleotide (FGAR) and glutamine to yield formylglycinamidine ribonucleotide (FGAM) and glutamate. The FGAM synthase complex is composed of three subunits. PurQ produces an ammonia molecule by converting glutamine to glutamate. PurL transfers the ammonia molecule to FGAR to form FGAM in an ATP-dependent manner. PurS interacts with PurQ and PurL and is thought to assist in the transfer of the ammonia molecule from PurQ to PurL. This chain is Phosphoribosylformylglycinamidine synthase subunit PurL, found in Haloquadratum walsbyi (strain DSM 16790 / HBSQ001).